Here is a 334-residue protein sequence, read N- to C-terminus: Beta-glucanase (334 aa).

An N-terminal signal peptide occupies residues 1 to 27 (MKNRVISLLMASLLLVLSVIVAPFYKA). One can recognise a GH16 domain in the interval 28–248 (EAATVVNTPF…YVKYYPNGVP (221 aa)). Glu136 acts as the Nucleophile in catalysis. Glu140 (proton donor) is an active-site residue. Residues 246–265 (GVPQDNPTPTPTIAPSTPTN) form a disordered region. Positions 267 to 334 (NLPLKGDVNG…RYLIRAIPSL (68 aa)) constitute a Dockerin domain.

It belongs to the glycosyl hydrolase 16 family.

It catalyses the reaction Hydrolysis of (1-&gt;4)-beta-D-glucosidic linkages in beta-D-glucans containing (1-&gt;3)- and (1-&gt;4)-bonds.. This is Beta-glucanase (licB) from Acetivibrio thermocellus (Hungateiclostridium thermocellum).